We begin with the raw amino-acid sequence, 501 residues long: CUGBP Elav-like family member 1 (501 aa).

The segment at 2-196 (NGSLDHPDQP…DTQKDKEQKR (195 aa)) is binds strongly to URE. RRM domains follow at residues 16–99 (IKMF…PADS) and 108–188 (RKLF…FADT). Low complexity-rich tracts occupy residues 274 to 298 (PTGS…TPSG) and 312 to 323 (SSPTSSTSSSVN). A disordered region spans residues 274-323 (PTGSSALTTSSSPLSVLTSSGTPSGQPAQSAWDAYKAGSSPTSSTSSSVN). The interval 397–501 (LLSQQNVSAA…KRSKNDSKPY (105 aa)) is binds strongly to URE. The 79-residue stretch at 416–494 (ANLFIYHLPQ…KRLKVQLKRS (79 aa)) folds into the RRM 3 domain.

It belongs to the CELF/BRUNOL family.

The protein resides in the nucleus. It localises to the cytoplasm. In terms of biological role, RNA-binding protein implicated in the regulation of several post-transcriptional events. May be involved in mRNA translation activation and stability. Involved in the regulation of muscle-specific splicing of alpha actinin pre-mRNAs via the binding to the UR-repeat element (URE) at the branch point of the non-muscle (NM) exon. This is CUGBP Elav-like family member 1 (celf1) from Danio rerio (Zebrafish).